An 816-amino-acid polypeptide reads, in one-letter code: Phosphatidylinositol 4-kinase beta (816 aa).

Disordered stretches follow at residues 1–30, 101–120, and 248–318; these read MGDT…GSLL, EDEM…RRRR, and AHRK…SFSS. The residue at position 2 (Gly2) is an N-acetylglycine. The interaction with ACBD3 stretch occupies residues 2–68; that stretch reads GDTIVEPAPL…VKLLHGGVAI (67 aa). The 214-residue stretch at 29–242 folds into the PIK helical domain; that stretch reads LLSVITEGVG…GTKLRKLILS (214 aa). Phosphoserine is present on Ser258. A Phosphothreonine modification is found at Thr263. Ser266, Ser275, Ser277, Ser284, and Ser294 each carry phosphoserine. Composition is skewed to polar residues over residues 278-297 and 306-318; these read DATA…SNPK and SSST…SFSS. A Phosphoserine modification is found at Ser428. Thr438 is modified (phosphothreonine). Ser511 bears the Phosphoserine mark. Phosphothreonine is present on residues Thr517 and Thr519. In terms of domain architecture, PI3K/PI4K catalytic spans 535 to 801; sequence EPWQEKVRRI…MVDGSMRSIT (267 aa). The segment at 541 to 547 is G-loop; the sequence is VRRIREG. The tract at residues 668 to 676 is catalytic loop; sequence QVKDRHNGN. The tract at residues 687 to 711 is activation loop; that stretch reads HIDFGFILSSSPRNLGFETSAFKLT.

This sequence belongs to the PI3/PI4-kinase family. Type III PI4K subfamily. As to quaternary structure, interacts with ARF1 and ARF3 in the Golgi complex, but not with ARF4, ARF5 or ARF6. Interacts with NCS1/FREQ in a calcium-independent manner. Interacts with CALN1/CABP8 and CALN2/CABP7; in a calcium-dependent manner; this interaction competes with NCS1/FREQ binding. Interacts with ACBD3. Interacts with ARMH3, YWHAB, YWHAE, YWHAG, YWHAH, YWHAQ, YWHAZ and SFN. Interacts with GGA2 (via VHS domain); the interaction is important for PI4KB location at the Golgi apparatus membrane. Interacts with ATG9A. It depends on Mg(2+) as a cofactor. The cofactor is Mn(2+).

It localises to the endomembrane system. The protein resides in the mitochondrion outer membrane. Its subcellular location is the rough endoplasmic reticulum membrane. It is found in the golgi apparatus. The protein localises to the golgi apparatus membrane. It carries out the reaction a 1,2-diacyl-sn-glycero-3-phospho-(1D-myo-inositol) + ATP = a 1,2-diacyl-sn-glycero-3-phospho-(1D-myo-inositol 4-phosphate) + ADP + H(+). Its activity is regulated as follows. Inhibited by wortmannin. Increased kinase activity upon interaction with NCS1/FREQ. Phosphorylates phosphatidylinositol (PI) in the first committed step in the production of the second messenger inositol-1,4,5,-trisphosphate (PIP). May regulate Golgi disintegration/reorganization during mitosis, possibly via its phosphorylation. Involved in Golgi-to-plasma membrane trafficking. This is Phosphatidylinositol 4-kinase beta (PI4KB) from Bos taurus (Bovine).